The chain runs to 450 residues: Ribosomal protein uS12 methylthiotransferase RimO (450 aa).

An MTTase N-terminal domain is found at Asn-9–Lys-124. [4Fe-4S] cluster contacts are provided by Cys-18, Cys-53, Cys-87, Cys-148, Cys-152, and Cys-155. The Radical SAM core domain maps to Thr-134–Leu-365. The TRAM domain maps to Gln-367 to Asn-434.

This sequence belongs to the methylthiotransferase family. RimO subfamily. It depends on [4Fe-4S] cluster as a cofactor.

Its subcellular location is the cytoplasm. It catalyses the reaction L-aspartate(89)-[ribosomal protein uS12]-hydrogen + (sulfur carrier)-SH + AH2 + 2 S-adenosyl-L-methionine = 3-methylsulfanyl-L-aspartate(89)-[ribosomal protein uS12]-hydrogen + (sulfur carrier)-H + 5'-deoxyadenosine + L-methionine + A + S-adenosyl-L-homocysteine + 2 H(+). In terms of biological role, catalyzes the methylthiolation of an aspartic acid residue of ribosomal protein uS12. The polypeptide is Ribosomal protein uS12 methylthiotransferase RimO (Christiangramia forsetii (strain DSM 17595 / CGMCC 1.15422 / KT0803) (Gramella forsetii)).